Here is a 150-residue protein sequence, read N- to C-terminus: Cytosine deaminase (150 aa).

Residues 3 to 121 (FDDKKGLQVA…KLLIENGVEV (119 aa)) enclose the CMP/dCMP-type deaminase domain. Asn44 contacts substrate. His55 is a binding site for Zn(2+). Glu57 serves as the catalytic Proton donor. Positions 84 and 87 each coordinate Zn(2+). Asp147 contacts substrate.

It belongs to the cytidine and deoxycytidylate deaminase family. Homodimer. The cofactor is Zn(2+).

It is found in the cytoplasm. The protein localises to the nucleus. The catalysed reaction is cytosine + H2O + H(+) = uracil + NH4(+). Its pathway is pyrimidine metabolism; UMP biosynthesis via salvage pathway; uracil from cytosine: step 1/1. In terms of biological role, catalyzes the hydrolytic deamination of cytosine to uracil or 5-methylcytosine to thymine. Is involved in the pyrimidine salvage pathway, which allows the cell to utilize cytosine for pyrimidine nucleotide synthesis. This is Cytosine deaminase from Candida albicans (strain SC5314 / ATCC MYA-2876) (Yeast).